Reading from the N-terminus, the 699-residue chain is tRNA 5-methylaminomethyl-2-thiouridine biosynthesis bifunctional protein MnmC (699 aa).

The segment at 1–260 (MTAKPQKSCQ…ERKLLRQQAD (260 aa)) is tRNA (mnm(5)s(2)U34)-methyltransferase. Positions 282–699 (VGGGLASANL…LRKLLKGKAL (418 aa)) are FAD-dependent cmnm(5)s(2)U34 oxidoreductase.

It in the N-terminal section; belongs to the methyltransferase superfamily. tRNA (mnm(5)s(2)U34)-methyltransferase family. This sequence in the C-terminal section; belongs to the DAO family. FAD is required as a cofactor.

The protein resides in the cytoplasm. The enzyme catalyses 5-aminomethyl-2-thiouridine(34) in tRNA + S-adenosyl-L-methionine = 5-methylaminomethyl-2-thiouridine(34) in tRNA + S-adenosyl-L-homocysteine + H(+). Catalyzes the last two steps in the biosynthesis of 5-methylaminomethyl-2-thiouridine (mnm(5)s(2)U) at the wobble position (U34) in tRNA. Catalyzes the FAD-dependent demodification of cmnm(5)s(2)U34 to nm(5)s(2)U34, followed by the transfer of a methyl group from S-adenosyl-L-methionine to nm(5)s(2)U34, to form mnm(5)s(2)U34. The sequence is that of tRNA 5-methylaminomethyl-2-thiouridine biosynthesis bifunctional protein MnmC from Shewanella sp. (strain MR-4).